A 181-amino-acid chain; its full sequence is Protein canopy homolog 1 (181 aa).

Residues 1 to 21 (MAILLHFGVLITAFLSSHVEG) form the signal peptide. In terms of domain architecture, Saposin B-type spans 25-177 (PILYCGACRA…EETGLCKEYL (153 aa)). Intrachain disulfides connect Cys-29–Cys-173, Cys-32–Cys-166, and Cys-87–Cys-139. Residues 178–181 (HNEL) carry the Prevents secretion from ER motif.

Belongs to the canopy family.

It localises to the endoplasmic reticulum. Plays an role in early embryonic development. The polypeptide is Protein canopy homolog 1 (cnpy1) (Xenopus laevis (African clawed frog)).